We begin with the raw amino-acid sequence, 1546 residues long: Hybrid signal transduction histidine kinase D (1546 aa).

A coiled-coil region spans residues 36-63 (MRKQKPDHEKTREELIEEINHLRAVSNS). Residues 65–131 (KNARIMLDEM…NIDNVREAVH (67 aa)) enclose the PAS domain. In terms of domain architecture, PAC spans 139–193 (IRYETEIFGKSAGTEKITIDFSLMPLFNDKGEVSLILPEGRNITEKRLGELEIER). In terms of domain architecture, Histidine kinase 1 spans 218–440 (NVSHELRTPL…QFTLRLPLTP (223 aa)). Residue His-221 is modified to Phosphohistidine; by autocatalysis. In terms of domain architecture, Response regulatory 1 spans 571 to 686 (IVLVVEDNPE…ELVARVVNLM (116 aa)). Position 619 is a 4-aspartylphosphate (Asp-619). Positions 747 to 1010 (NLSHELRTPL…QFTVVLPIIK (264 aa)) constitute a Histidine kinase 2 domain. Position 750 is a phosphohistidine; by autocatalysis (His-750). Composition is skewed to low complexity over residues 1013 to 1031 (SSSN…SPPL) and 1042 to 1146 (NYIN…SNNN). Disordered stretches follow at residues 1013-1148 (SSSN…NNEK), 1266-1285 (NNSN…PPSS), and 1313-1350 (PLSE…KANS). Over residues 1313–1346 (PLSELKSSSNNNNNNNNNSNNNNNNSMSPNLRSP) the composition is skewed to low complexity. A Response regulatory 2 domain is found at 1359 to 1483 (QIMLVDDLEE…ELSNSILTLI (125 aa)). Asp-1412 carries the post-translational modification 4-aspartylphosphate. Residues 1500-1546 (QNNNNNNNNNNNNNNNNNNNNNNINNGNDDDSLLLTDSRPCKKANSQ) are disordered. Low complexity predominate over residues 1501-1526 (NNNNNNNNNNNNNNNNNNNNNNINNG).

It carries out the reaction ATP + protein L-histidine = ADP + protein N-phospho-L-histidine.. Its function is as follows. Acts as a receptor histidine kinase for a signal transduction pathway. This protein undergoes an ATP-dependent autophosphorylation at a conserved histidine residue in the kinase core, and a phosphoryl group is then transferred to a conserved aspartate residue in the receiver domain. This is Hybrid signal transduction histidine kinase D (dhkD) from Dictyostelium discoideum (Social amoeba).